A 368-amino-acid polypeptide reads, in one-letter code: 3-dehydroquinate synthase (368 aa).

NAD(+) is bound by residues 71–76 (DGESFK), 105–109 (GVIGD), 129–130 (TT), K142, K151, and 169–172 (TLRT). Positions 184, 247, and 264 each coordinate Zn(2+).

This sequence belongs to the sugar phosphate cyclases superfamily. Dehydroquinate synthase family. It depends on NAD(+) as a cofactor. Co(2+) is required as a cofactor. The cofactor is Zn(2+).

It is found in the cytoplasm. It carries out the reaction 7-phospho-2-dehydro-3-deoxy-D-arabino-heptonate = 3-dehydroquinate + phosphate. Its pathway is metabolic intermediate biosynthesis; chorismate biosynthesis; chorismate from D-erythrose 4-phosphate and phosphoenolpyruvate: step 2/7. Catalyzes the conversion of 3-deoxy-D-arabino-heptulosonate 7-phosphate (DAHP) to dehydroquinate (DHQ). The chain is 3-dehydroquinate synthase from Ralstonia nicotianae (strain ATCC BAA-1114 / GMI1000) (Ralstonia solanacearum).